A 360-amino-acid polypeptide reads, in one-letter code: Insulin gene enhancer protein ISL-2 (360 aa).

2 consecutive LIM zinc-binding domains span residues 25–86 and 87–149; these read AMCV…RLFG and IKCA…LLER. The interval 151–177 is disordered; that stretch reads AAGSPRSPGPLPGTPPGLHLPDAGSGQ. Phosphoserine occurs at positions 154 and 157. Residues 192–251 constitute a DNA-binding region (homeobox); that stretch reads TTRVRTVLNEKQLHTLRTCYAANPRPDALMKEQLVEMTGLSPRVIRVWFQNKRCKDKKKS. The tract at residues 273–302 is LIM-binding domain (LID); that stretch reads GTLLVAGSPSAHENAVQGSAVEVQTYQPPW. S280 is subject to Phosphoserine. The span at 328 to 337 shows a compositional bias: low complexity; it reads SGSLGNSSGS. The interval 328–360 is disordered; that stretch reads SGSLGNSSGSDVTSLSSQLPDTPNSMVPSPVET. The segment covering 338-360 has biased composition (polar residues); sequence DVTSLSSQLPDTPNSMVPSPVET.

Interacts with LHX4.

It is found in the nucleus. Transcriptional factor that defines subclasses of motoneurons that segregate into columns in the spinal cord and select distinct axon pathways. This is Insulin gene enhancer protein ISL-2 (Isl2) from Rattus norvegicus (Rat).